A 249-amino-acid chain; its full sequence is Probable transcriptional regulatory protein Dtur_1615 (249 aa).

It belongs to the TACO1 family.

Its subcellular location is the cytoplasm. This is Probable transcriptional regulatory protein Dtur_1615 from Dictyoglomus turgidum (strain DSM 6724 / Z-1310).